The following is a 66-amino-acid chain: Putative antitoxin APE_0279a.1 (66 aa).

Belongs to the UPF0165 family.

Its function is as follows. Possibly the antitoxin component of a type II toxin-antitoxin (TA) system. The polypeptide is Putative antitoxin APE_0279a.1 (Aeropyrum pernix (strain ATCC 700893 / DSM 11879 / JCM 9820 / NBRC 100138 / K1)).